Consider the following 150-residue polypeptide: Deoxyuridine 5'-triphosphate nucleotidohydrolase (150 aa).

Substrate-binding positions include 70–72, N82, 86–88, and M96; these read RSG and LID.

It belongs to the dUTPase family. Requires Mg(2+) as cofactor.

The enzyme catalyses dUTP + H2O = dUMP + diphosphate + H(+). It functions in the pathway pyrimidine metabolism; dUMP biosynthesis; dUMP from dCTP (dUTP route): step 2/2. In terms of biological role, this enzyme is involved in nucleotide metabolism: it produces dUMP, the immediate precursor of thymidine nucleotides and it decreases the intracellular concentration of dUTP so that uracil cannot be incorporated into DNA. The polypeptide is Deoxyuridine 5'-triphosphate nucleotidohydrolase (Baumannia cicadellinicola subsp. Homalodisca coagulata).